Consider the following 682-residue polypeptide: DNA-directed RNA polymerase subunit beta' (682 aa).

Positions 69, 71, 87, and 90 each coordinate Zn(2+). Residues Asp-489, Asp-491, and Asp-493 each contribute to the Mg(2+) site.

The protein belongs to the RNA polymerase beta' chain family. RpoC1 subfamily. As to quaternary structure, in plastids the minimal PEP RNA polymerase catalytic core is composed of four subunits: alpha, beta, beta', and beta''. When a (nuclear-encoded) sigma factor is associated with the core the holoenzyme is formed, which can initiate transcription. It depends on Mg(2+) as a cofactor. Zn(2+) is required as a cofactor.

It is found in the plastid. It localises to the chloroplast. The catalysed reaction is RNA(n) + a ribonucleoside 5'-triphosphate = RNA(n+1) + diphosphate. Functionally, DNA-dependent RNA polymerase catalyzes the transcription of DNA into RNA using the four ribonucleoside triphosphates as substrates. This Acorus gramineus (Dwarf sweet flag) protein is DNA-directed RNA polymerase subunit beta'.